A 253-amino-acid polypeptide reads, in one-letter code: MALSMPLNGLKEEDKEPLIELFVKAGSDGESIGNCPFSQRLFMILWLKGVVFSVSTVDLKRKPADLQNLAPGTHPPFITFNSEVKTDVNKIEEFLEEVLCPPKYLKLSPKHPESNTAGMDIFAKFSAYIKNSRPEANEALERGLLKTLQKLDEYLNSPLPDEIDENSMEDIKFSTRKFLDGDEMTLADCNLLPKLHIVKVVAKKYRNFDIPKEMTGIWRYLTNAYSRDEFTNTCPSDKEVEIAYSDVAKRLTK.

Ala-2 is subject to N-acetylalanine. Residues 2–101 (ALSMPLNGLK…EEFLEEVLCP (100 aa)) form a required for insertion into the membrane region. At Ser-4 the chain carries Phosphoserine. Lys-24 is subject to N6-acetyllysine. Residues 37–57 (FSQRLFMILWLKGVVFSVSTV) traverse the membrane as a helical segment. The 164-residue stretch at 81 to 244 (NSEVKTDVNK…PSDKEVEIAY (164 aa)) folds into the GST C-terminal domain. Residue Lys-130 is modified to N6-acetyllysine. Phosphoserine is present on residues Ser-132, Ser-167, and Ser-236. Position 244 is a phosphotyrosine (Tyr-244).

This sequence belongs to the chloride channel CLIC family. In terms of assembly, monomer. Interacts with HRH3.

It is found in the cytoplasm. Its subcellular location is the cytoskeleton. The protein localises to the microtubule organizing center. The protein resides in the centrosome. It localises to the cytoplasmic vesicle membrane. It is found in the nucleus. Its subcellular location is the cell membrane. The protein localises to the mitochondrion. The protein resides in the cell junction. The catalysed reaction is chloride(in) = chloride(out). It carries out the reaction thiocyanate(in) = thiocyanate(out). The enzyme catalyses nitrate(in) = nitrate(out). It catalyses the reaction iodide(out) = iodide(in). The catalysed reaction is bromide(in) = bromide(out). It carries out the reaction fluoride(in) = fluoride(out). The enzyme catalyses choline(out) = choline(in). In terms of biological role, in the soluble state, catalyzes glutaredoxin-like thiol disulfide exchange reactions with reduced glutathione as electron donor. Can insert into membranes and form voltage-dependent multi-ion conductive channels. Membrane insertion seems to be redox-regulated and may occur only under oxidizing conditions. Has alternate cellular functions like a potential role in angiogenesis or in maintaining apical-basolateral membrane polarity during mitosis and cytokinesis. Could also promote endothelial cell proliferation and regulate endothelial morphogenesis (tubulogenesis). Promotes cell-surface expression of HRH3. This Pongo abelii (Sumatran orangutan) protein is Chloride intracellular channel protein 4 (CLIC4).